A 210-amino-acid polypeptide reads, in one-letter code: Guanylate kinase (210 aa).

The Guanylate kinase-like domain maps to 23–203 (GRVVVLSGPS…ACAELVSLLV (181 aa)). 30–37 (GPSAVGKS) provides a ligand contact to ATP.

Belongs to the guanylate kinase family.

Its subcellular location is the cytoplasm. It catalyses the reaction GMP + ATP = GDP + ADP. Functionally, essential for recycling GMP and indirectly, cGMP. The sequence is that of Guanylate kinase (gmk) from Mycobacterium leprae (strain TN).